Consider the following 81-residue polypeptide: Defensin-like protein b (81 aa).

The first 26 residues, 1-26 (MRNATFFIVFYVFISLVLSNVQDVTA), serve as a signal peptide directing secretion. Cystine bridges form between Cys31–Cys81, Cys42–Cys66, Cys50–Cys76, and Cys64–Cys78.

It belongs to the DEFL family. As to expression, expressed in microspores and in young and mature anthers.

It is found in the secreted. Functionally, involved in self-incompatibility. The polypeptide is Defensin-like protein b (SCRb-1) (Arabidopsis lyrata (Lyre-leaved rock-cress)).